Reading from the N-terminus, the 457-residue chain is MALWGGRFSQAADQRFKQFNDSLRFDYRLAEQDIIGSVAWSKALVTVGVLNADEQQQLEQALSVLLEEVQANPHAILASDAEDIHSWVETKLIDKVGDLGKKLHTGRSRNDQVATDLKLWCKFQITELQTAVQQLQQALVMTAEANQDAVMPGYTHLQRAQPVTFAHWCLAYVEMLSRDESRLQDTLKRLDVSPLGCGALAGTAYAIDREQLAGWLGFASATRNSLDSVSDRDHVLELLSDASIGMVHLSRFAEDLIFFNSGEAAFVDLSDRVTSGSSLMPQKKNPDALELIRGKCGRVQGALTGMTMTLKGLPLAYNKDMQEDKEGLFDALDTWLDCLHMAALVLDGIQVKRPRCKEAAEQGYANATELADYLVAKGVPFREAHHIVGEAVVEAIRQGKALEALALSDLQQFSSVIGDDVYPILALQSCLDKRVAKGGVSPQQVASAIAEAKARLF.

Belongs to the lyase 1 family. Argininosuccinate lyase subfamily.

It localises to the cytoplasm. The enzyme catalyses 2-(N(omega)-L-arginino)succinate = fumarate + L-arginine. Its pathway is amino-acid biosynthesis; L-arginine biosynthesis; L-arginine from L-ornithine and carbamoyl phosphate: step 3/3. In Yersinia pseudotuberculosis serotype O:1b (strain IP 31758), this protein is Argininosuccinate lyase.